The chain runs to 35 residues: Pheromone-binding protein 1 (35 aa).

Belongs to the PBP/GOBP family. Homodimer. As to expression, antenna.

Functionally, this major soluble protein in olfactory sensilla of male moths might serve to solubilize the extremely hydrophobic pheromone molecules and to transport pheromone through the aqueous lymph to receptors located on olfactory cilia. The sequence is that of Pheromone-binding protein 1 from Lymantria dispar (Gypsy moth).